A 442-amino-acid polypeptide reads, in one-letter code: F-box/kelch-repeat protein OR23 (442 aa).

The region spanning 37–84 (TLIPGLSNDVGRLILSFVPYPHISRIKSTCKSWYAFLSSKTLISLRHS) is the F-box domain. Kelch repeat units follow at residues 93-139 (LSHL…NFVA), 145-200 (YVYV…AMPG), 204-257 (RIIV…LVEN), 269-328 (EFWV…KIVA), 330-377 (DCGK…ALNG), and 390-437 (LMDT…TTVM).

This Arabidopsis thaliana (Mouse-ear cress) protein is F-box/kelch-repeat protein OR23 (OR23).